The following is a 245-amino-acid chain: Probable phosphatase YcdX (245 aa).

Positions 7, 9, 15, 40, 73, 101, 131, 192, and 194 each coordinate Zn(2+).

Belongs to the PHP family. As to quaternary structure, homotrimer. Zn(2+) serves as cofactor.

The chain is Probable phosphatase YcdX from Salmonella arizonae (strain ATCC BAA-731 / CDC346-86 / RSK2980).